Consider the following 354-residue polypeptide: Adenine deaminase (354 aa).

Positions 19, 21, and 211 each coordinate Zn(2+). Residue Glu-214 is the Proton donor of the active site. Asp-291 contributes to the Zn(2+) binding site. Asp-292 contacts substrate.

Belongs to the metallo-dependent hydrolases superfamily. Adenosine and AMP deaminases family. Adenine deaminase type 2 subfamily. Requires Zn(2+) as cofactor.

The protein resides in the cytoplasm. It localises to the nucleus. The catalysed reaction is adenine + H2O + H(+) = hypoxanthine + NH4(+). Catalyzes the hydrolytic deamination of adenine to hypoxanthine. Plays an important role in the purine salvage pathway and in nitrogen catabolism. This is Adenine deaminase (aah1) from Aspergillus fumigatus (strain ATCC MYA-4609 / CBS 101355 / FGSC A1100 / Af293) (Neosartorya fumigata).